Consider the following 722-residue polypeptide: MSSARTPLPTLNERDTEQPTLGHLDSKPSSKSNMLRGRNSATSADEQPHIGNYRLLKTIGKGNFAKVKLARHILTGKEVAVKIIDKTQLNSSSLQKLFREVRIMKVLNHPNIVKLFEVIETEKTLYLVMEYASGGEVFDYLVAHGRMKEKEARAKFRQIVSAVQYCHQKFIVHRDLKAENLLLDADMNIKIADFGFSNEFTFGNKLDTFCGSPPYAAPELFQGKKYDGPEVDVWSLGVILYTLVSGSLPFDGQNLKELRERVLRGKYRIPFYMSTDCENLLKKFLILNPSKRGTLEQIMKDRWMNVGHEDDELKPYVEPLPDYKDPRRTELMVSMGYTREEIQDSLVGQRYNEVMATYLLLGYKSSELEGDTITLKPRPSADLTNSSAPSPSHKVQRSVSANPKQRRSSDQAVPAIPTSNSYSKKTQSNNAENKRPEEETGRKASSTAKVPASPLPGLDRKKTTPTPSTNSVLSTSTNRSRNSPLLDRASLGQASIQNGKDSTAPQRVPVASPSAHNISSSSGAPDRTNFPRGVSSRSTFHAGQLRQVRDQQNLPFGVTPASPSGHSQGRRGASGSIFSKFTSKFVRRNLNEPESKDRVETLRPHVVGGGGTDKEKEEFREAKPRSLRFTWSMKTTSSMEPNEMMREIRKVLDANSCQSELHERYMLLCVHGTPGHENFVQWEMEVCKLPRLSLNGVRFKRISGTSMAFKNIASKIANELKL.

Residues 1 to 46 form a disordered region; the sequence is MSSARTPLPTLNERDTEQPTLGHLDSKPSSKSNMLRGRNSATSADE. The segment covering 27–45 has biased composition (polar residues); sequence KPSSKSNMLRGRNSATSAD. Serine 40 is modified (phosphoserine). Residues 53-304 form the Protein kinase domain; that stretch reads YRLLKTIGKG…LEQIMKDRWM (252 aa). Threonine 58 bears the Phosphothreonine; by autocatalysis mark. Residues 59-67 and lysine 82 contribute to the ATP site; that span reads IGKGNFAKV. Residues serine 91, serine 92, and serine 93 each carry the phosphoserine; by CaMK1 modification. Aspartate 175 serves as the catalytic Proton acceptor. Threonine 208 carries the phosphothreonine; by LKB1 and TAOK1 modification. The residue at position 212 (serine 212) is a Phosphoserine; by GSK3-beta. A Phosphoserine; by autocatalysis modification is found at serine 274. Threonine 275 is subject to Phosphothreonine; by autocatalysis. The residue at position 294 (threonine 294) is a Phosphothreonine; by CaMK1. The UBA domain maps to 323–362; the sequence is YKDPRRTELMVSMGYTREEIQDSLVGQRYNEVMATYLLLG. The interval 373–576 is disordered; sequence ITLKPRPSAD…SQGRRGASGS (204 aa). Residues serine 408 and serine 409 each carry the phosphoserine modification. Over residues 417–431 the composition is skewed to polar residues; sequence PTSNSYSKKTQSNNA. Positions 432 to 442 are enriched in basic and acidic residues; that stretch reads ENKRPEEETGR. Serine 453 carries the post-translational modification Phosphoserine. A Phosphothreonine modification is found at threonine 464. A compositionally biased stretch (polar residues) spans 464-483; it reads TPTPSTNSVLSTSTNRSRNS. 2 positions are modified to phosphoserine: serine 483 and serine 490. Residues 492–505 show a composition bias toward polar residues; sequence GQASIQNGKDSTAP. The span at 511-524 shows a compositional bias: low complexity; that stretch reads ASPSAHNISSSSGA. Phosphoserine occurs at positions 512, 514, and 535. At threonine 539 the chain carries Phosphothreonine; by PKC/PRKCZ. Phosphoserine is present on residues serine 562 and serine 656. Positions 673–722 constitute a KA1 domain; the sequence is TPGHENFVQWEMEVCKLPRLSLNGVRFKRISGTSMAFKNIASKIANELKL.

This sequence belongs to the protein kinase superfamily. CAMK Ser/Thr protein kinase family. SNF1 subfamily. As to quaternary structure, homodimer. Interacts (when phosphorylated at Thr-539) with YWHAZ. Interacts with MTCL1; the interaction is direct and increases MARK2 microtubule-binding ability. Interacts with PAK5; leading to inhibit the protein kinase activity. Interacts with MAPT/TAU. Interacts with YWHAB, YWHAG and YWHAQ. Mg(2+) serves as cofactor. Autophosphorylated. Phosphorylated at Thr-208 by STK11/LKB1 in complex with STE20-related adapter-alpha (STRADA) pseudo kinase and CAB39. Phosphorylation at Thr-208 by TAOK1 activates the kinase activity, leading to phosphorylation and detachment of MAPT/TAU from microtubules. Phosphorylation at Ser-212 by GSK3-beta (GSK3B) inhibits the kinase activity. Phosphorylation by CaMK1 promotes activity and is required to promote neurite outgrowth. Phosphorylation at Thr-539 by PRKCZ/aPKC in polarized epithelial cells inhibits the kinase activity and promotes binding to 14-3-3 protein YWHAZ, leading to relocation from cell membrane to cytoplasm.

The protein resides in the cell membrane. It is found in the lateral cell membrane. Its subcellular location is the cytoplasm. It localises to the cytoskeleton. The protein localises to the cell projection. The protein resides in the dendrite. It catalyses the reaction L-seryl-[protein] + ATP = O-phospho-L-seryl-[protein] + ADP + H(+). The catalysed reaction is L-threonyl-[protein] + ATP = O-phospho-L-threonyl-[protein] + ADP + H(+). It carries out the reaction L-seryl-[tau protein] + ATP = O-phospho-L-seryl-[tau protein] + ADP + H(+). The enzyme catalyses L-threonyl-[tau protein] + ATP = O-phospho-L-threonyl-[tau protein] + ADP + H(+). Inhibited by hymenialdisine. Activated by phosphorylation on Thr-208 by STK11/LKB1 and TAOK1. Inhibited by phosphorylation at Ser-212 or Thr-539. Inhibited by PAK5; inhibition is independent of the kinase activity of PAK5. Its function is as follows. Serine/threonine-protein kinase. Involved in cell polarity and microtubule dynamics regulation. Phosphorylates CRTC2/TORC2, DCX, HDAC7, KIF13B, MAP2, MAP4 and RAB11FIP2. Phosphorylates the microtubule-associated protein MAPT/TAU. Plays a key role in cell polarity by phosphorylating the microtubule-associated proteins MAP2, MAP4 and MAPT/TAU at KXGS motifs, causing detachment from microtubules, and their disassembly. Regulates epithelial cell polarity by phosphorylating RAB11FIP2. Involved in the regulation of neuronal migration through its dual activities in regulating cellular polarity and microtubule dynamics, possibly by phosphorylating and regulating DCX. Regulates axogenesis by phosphorylating KIF13B, promoting interaction between KIF13B and 14-3-3 and inhibiting microtubule-dependent accumulation of KIF13B. Also required for neurite outgrowth and establishment of neuronal polarity. Regulates localization and activity of some histone deacetylases by mediating phosphorylation of HDAC7, promoting subsequent interaction between HDAC7 and 14-3-3 and export from the nucleus. Also acts as a positive regulator of the Wnt signaling pathway, probably by mediating phosphorylation of dishevelled proteins (DVL1, DVL2 and/or DVL3). Modulates the developmental decision to build a columnar versus a hepatic epithelial cell apparently by promoting a switch from a direct to a transcytotic mode of apical protein delivery. Essential for the asymmetric development of membrane domains of polarized epithelial cells. In Rattus norvegicus (Rat), this protein is Serine/threonine-protein kinase MARK2.